Reading from the N-terminus, the 324-residue chain is Endochitinase B (324 aa).

The N-terminal stretch at 1–23 (MRLREFTALSSLLFSLLLLSASA) is a signal peptide. The Chitin-binding type-1 domain occupies 24 to 65 (EQCGSQAGGARCASGLCCSKFGWCGNTNDYCGPGNCQSQCPG). 4 cysteine pairs are disulfide-bonded: C26-C41, C35-C47, C40-C54, and C59-C63. 2 positions are modified to 4-hydroxyproline: P67 and P69. Cystine bridges form between C96–C158, C170–C178, and C277–C309. Residue E140 is the Proton donor of the active site. A propeptide spans 318-324 (GLLVDTM) (removed in mature form).

Belongs to the glycosyl hydrolase 19 family. Chitinase class I subfamily. Post-translationally, the 4-hydroxyproline residues are not glycosylated in this plant vacuolar protein.

It localises to the vacuole. It carries out the reaction Random endo-hydrolysis of N-acetyl-beta-D-glucosaminide (1-&gt;4)-beta-linkages in chitin and chitodextrins.. Its function is as follows. Defense against chitin-containing fungal pathogens. The polypeptide is Endochitinase B (CHN50) (Nicotiana tabacum (Common tobacco)).